The sequence spans 255 residues: 5'-nucleotidase SurE (255 aa).

Residues D11, D12, S43, and N99 each coordinate a divalent metal cation.

Belongs to the SurE nucleotidase family. Requires a divalent metal cation as cofactor.

Its subcellular location is the cytoplasm. It catalyses the reaction a ribonucleoside 5'-phosphate + H2O = a ribonucleoside + phosphate. Its function is as follows. Nucleotidase that shows phosphatase activity on nucleoside 5'-monophosphates. This chain is 5'-nucleotidase SurE, found in Caldanaerobacter subterraneus subsp. tengcongensis (strain DSM 15242 / JCM 11007 / NBRC 100824 / MB4) (Thermoanaerobacter tengcongensis).